Consider the following 304-residue polypeptide: Ribonuclease Z (304 aa).

Zn(2+) is bound by residues H61, H63, D65, H66, H138, D206, and H265. Residue D65 is the Proton acceptor of the active site.

It belongs to the RNase Z family. As to quaternary structure, homodimer. The cofactor is Zn(2+).

It carries out the reaction Endonucleolytic cleavage of RNA, removing extra 3' nucleotides from tRNA precursor, generating 3' termini of tRNAs. A 3'-hydroxy group is left at the tRNA terminus and a 5'-phosphoryl group is left at the trailer molecule.. In terms of biological role, zinc phosphodiesterase, which displays some tRNA 3'-processing endonuclease activity. Probably involved in tRNA maturation, by removing a 3'-trailer from precursor tRNA. The chain is Ribonuclease Z from Lachnospira eligens (strain ATCC 27750 / DSM 3376 / VPI C15-48 / C15-B4) (Eubacterium eligens).